The sequence spans 204 residues: Holliday junction branch migration complex subunit RuvA (204 aa).

The segment at 1 to 64 (MIGRLRGVVI…EDAQLLYGFN (64 aa)) is domain I. A domain II region spans residues 65-143 (HKQERALFRE…GWVSHDLFSP (79 aa)). The tract at residues 144–155 (AEISLPARESVL) is flexible linker. The tract at residues 156–204 (RAPDSSEEAASALVALGYKPQQASQIVSKIAKEGMSVEDIIRESLRSLV) is domain III.

It belongs to the RuvA family. In terms of assembly, homotetramer. Forms an RuvA(8)-RuvB(12)-Holliday junction (HJ) complex. HJ DNA is sandwiched between 2 RuvA tetramers; dsDNA enters through RuvA and exits via RuvB. An RuvB hexamer assembles on each DNA strand where it exits the tetramer. Each RuvB hexamer is contacted by two RuvA subunits (via domain III) on 2 adjacent RuvB subunits; this complex drives branch migration. In the full resolvosome a probable DNA-RuvA(4)-RuvB(12)-RuvC(2) complex forms which resolves the HJ.

The protein localises to the cytoplasm. Functionally, the RuvA-RuvB-RuvC complex processes Holliday junction (HJ) DNA during genetic recombination and DNA repair, while the RuvA-RuvB complex plays an important role in the rescue of blocked DNA replication forks via replication fork reversal (RFR). RuvA specifically binds to HJ cruciform DNA, conferring on it an open structure. The RuvB hexamer acts as an ATP-dependent pump, pulling dsDNA into and through the RuvAB complex. HJ branch migration allows RuvC to scan DNA until it finds its consensus sequence, where it cleaves and resolves the cruciform DNA. The protein is Holliday junction branch migration complex subunit RuvA of Aeromonas salmonicida (strain A449).